We begin with the raw amino-acid sequence, 182 residues long: Small ribosomal subunit protein uS4c (182 aa).

The disordered stretch occupies residues 12 to 31 (PGFTSKRPRSGSDLKNPLRS). The region spanning 82-143 (MRLDNILFRL…KQRSKALIQN (62 aa)) is the S4 RNA-binding domain.

This sequence belongs to the universal ribosomal protein uS4 family. As to quaternary structure, part of the 30S ribosomal subunit. Contacts protein S5. The interaction surface between S4 and S5 is involved in control of translational fidelity.

It localises to the plastid. Its subcellular location is the chloroplast. One of the primary rRNA binding proteins, it binds directly to 16S rRNA where it nucleates assembly of the body of the 30S subunit. Its function is as follows. With S5 and S12 plays an important role in translational accuracy. The chain is Small ribosomal subunit protein uS4c (rps4) from Hymenocallis littoralis (Beach spider-lily).